Reading from the N-terminus, the 206-residue chain is Molybdopterin synthase catalytic subunit (206 aa).

The segment covering 1–23 (MATQQPTQTDNSAQAQPPQTNPA) has biased composition (polar residues). The segment at 1–27 (MATQQPTQTDNSAQAQPPQTNPAKPTE) is disordered. Residues 131-132 (HR), lysine 147, and 154-156 (KRE) contribute to the substrate site. Basic and acidic residues predominate over residues 177 to 188 (KVDEPRIGKGEV). The interval 177–206 (KVDEPRIGKGEVDEKEDEGDSGNGGNDRKS) is disordered. The segment covering 197 to 206 (SGNGGNDRKS) has biased composition (gly residues).

It belongs to the MoaE family. MOCS2B subfamily. In terms of assembly, heterotetramer; composed of 2 small (MOCS2A) and 2 large (MOCS2B) subunits.

It is found in the cytoplasm. The catalysed reaction is 2 [molybdopterin-synthase sulfur-carrier protein]-C-terminal-Gly-aminoethanethioate + cyclic pyranopterin phosphate + H2O = molybdopterin + 2 [molybdopterin-synthase sulfur-carrier protein]-C-terminal Gly-Gly + 2 H(+). It participates in cofactor biosynthesis; molybdopterin biosynthesis. Functionally, catalytic subunit of the molybdopterin synthase complex, a complex that catalyzes the conversion of precursor Z into molybdopterin. Acts by mediating the incorporation of 2 sulfur atoms from thiocarboxylated MOCS2A into precursor Z to generate a dithiolene group. The polypeptide is Molybdopterin synthase catalytic subunit (nit-8) (Neurospora crassa (strain ATCC 24698 / 74-OR23-1A / CBS 708.71 / DSM 1257 / FGSC 987)).